We begin with the raw amino-acid sequence, 122 residues long: Large ribosomal subunit protein uL14 (122 aa).

Belongs to the universal ribosomal protein uL14 family. In terms of assembly, part of the 50S ribosomal subunit. Forms a cluster with proteins L3 and L19. In the 70S ribosome, L14 and L19 interact and together make contacts with the 16S rRNA in bridges B5 and B8.

Its function is as follows. Binds to 23S rRNA. Forms part of two intersubunit bridges in the 70S ribosome. The sequence is that of Large ribosomal subunit protein uL14 from Borreliella burgdorferi (strain ZS7) (Borrelia burgdorferi).